We begin with the raw amino-acid sequence, 701 residues long: Elongation factor G (701 aa).

The tr-type G domain occupies 8-290 (KRYRNIGICA…AVIEFLPAPD (283 aa)). Residues 17–24 (AHVDAGKT), 88–92 (DTPGH), and 142–145 (NKMD) contribute to the GTP site.

The protein belongs to the TRAFAC class translation factor GTPase superfamily. Classic translation factor GTPase family. EF-G/EF-2 subfamily.

The protein resides in the cytoplasm. Functionally, catalyzes the GTP-dependent ribosomal translocation step during translation elongation. During this step, the ribosome changes from the pre-translocational (PRE) to the post-translocational (POST) state as the newly formed A-site-bound peptidyl-tRNA and P-site-bound deacylated tRNA move to the P and E sites, respectively. Catalyzes the coordinated movement of the two tRNA molecules, the mRNA and conformational changes in the ribosome. This is Elongation factor G from Marinobacter nauticus (strain ATCC 700491 / DSM 11845 / VT8) (Marinobacter aquaeolei).